Here is an 89-residue protein sequence, read N- to C-terminus: Small ribosomal subunit protein uS14A (89 aa).

This sequence belongs to the universal ribosomal protein uS14 family. As to quaternary structure, part of the 30S ribosomal subunit. Contacts proteins S3 and S10.

Its function is as follows. Binds 16S rRNA, required for the assembly of 30S particles and may also be responsible for determining the conformation of the 16S rRNA at the A site. In Bacillus licheniformis (strain ATCC 14580 / DSM 13 / JCM 2505 / CCUG 7422 / NBRC 12200 / NCIMB 9375 / NCTC 10341 / NRRL NRS-1264 / Gibson 46), this protein is Small ribosomal subunit protein uS14A.